Reading from the N-terminus, the 633-residue chain is DNA mismatch repair protein MutL (633 aa).

Belongs to the DNA mismatch repair MutL/HexB family.

Functionally, this protein is involved in the repair of mismatches in DNA. It is required for dam-dependent methyl-directed DNA mismatch repair. May act as a 'molecular matchmaker', a protein that promotes the formation of a stable complex between two or more DNA-binding proteins in an ATP-dependent manner without itself being part of a final effector complex. The polypeptide is DNA mismatch repair protein MutL (Bacillus pumilus (strain SAFR-032)).